The primary structure comprises 40 residues: Alpha-1B-glycoprotein (40 aa).

Asn23 carries an N-linked (GlcNAc...) asparagine glycan.

As to quaternary structure, interacts with CRISP3. As to expression, plasma.

The protein resides in the secreted. The protein is Alpha-1B-glycoprotein (A1BG) of Sus scrofa (Pig).